Consider the following 307-residue polypeptide: Porphobilinogen deaminase (307 aa).

Position 241 is an S-(dipyrrolylmethanemethyl)cysteine (Cys-241).

Belongs to the HMBS family. In terms of assembly, monomer. Requires dipyrromethane as cofactor.

It catalyses the reaction 4 porphobilinogen + H2O = hydroxymethylbilane + 4 NH4(+). The protein operates within porphyrin-containing compound metabolism; protoporphyrin-IX biosynthesis; coproporphyrinogen-III from 5-aminolevulinate: step 2/4. Functionally, tetrapolymerization of the monopyrrole PBG into the hydroxymethylbilane pre-uroporphyrinogen in several discrete steps. In Coxiella burnetii (strain RSA 331 / Henzerling II), this protein is Porphobilinogen deaminase.